The sequence spans 407 residues: uncharacterized protein (407 aa).

The EAL domain maps to 1–250; sequence MLDPLDILTN…LERDVLKQRL (250 aa).

This is an uncharacterized protein from Bacillus subtilis (strain 168).